Consider the following 403-residue polypeptide: Ubiquitin-like modifier-activating enzyme 5 (403 aa).

5 residues coordinate ATP: G81, D102, K125, N148, and N182. Zn(2+) is bound by residues C224 and C227. C248 acts as the Glycyl thioester intermediate in catalysis. Zn(2+) is bound by residues C301 and C306. Residues 306–315 (CRKQQEEYKK) are compositionally biased toward basic and acidic residues. The tract at residues 306–337 (CRKQQEEYKKRAPAQPTQETAPQEEEEVVHED) is disordered. Positions 333-345 (VVHEDNEWGIELV) match the UFM1-interacting sequence (UIS) motif. The linker stretch occupies residues 346 to 376 (SEVSEEELKNSSGPVPTLPEGITVAYTVPKK). 2 positions are modified to phosphoserine: S357 and S392. A UFC1-binding sequence (UFC) motif is present at residues 388-403 (DSGESLEDLMARMKKM).

This sequence belongs to the ubiquitin-activating E1 family. UBA5 subfamily. As to quaternary structure, homodimer; homodimerization is required for UFM1 activation. Interacts (via UIS motif) with UFM1; binds UFM1 via a trans-binding mechanism in which UFM1 interacts with distinct sites in both subunits of the UBA5 homodimer. Interacts (via C-terminus) with UFC1. Interacts (via UIS motif) with GABARAPL2 and, with lower affinity, with GABARAP and GABARAPL1.

Its subcellular location is the cytoplasm. It is found in the nucleus. It localises to the endoplasmic reticulum membrane. The protein localises to the golgi apparatus. Functionally, E1-like enzyme which specifically catalyzes the first step in ufmylation. Activates UFM1 by first adenylating its C-terminal glycine residue with ATP, and thereafter linking this residue to the side chain of a cysteine residue in E1, yielding a UFM1-E1 thioester and free AMP. Activates UFM1 via a trans-binding mechanism, in which UFM1 interacts with distinct sites in both subunits of the UBA5 homodimer. Trans-binding also promotes stabilization of the UBA5 homodimer, and enhances ATP-binding. Transfer of UFM1 from UBA5 to the E2-like enzyme UFC1 also takes place using a trans mechanism. Ufmylation plays a key role in various processes, such as ribosome recycling, response to DNA damage, interferon response or reticulophagy (also called ER-phagy). Ufmylation is essential for erythroid differentiation of both megakaryocytes and erythrocytes. The polypeptide is Ubiquitin-like modifier-activating enzyme 5 (Rattus norvegicus (Rat)).